We begin with the raw amino-acid sequence, 165 residues long: Shikimate kinase (165 aa).

Residue 12-17 (GCGKST) coordinates ATP. Residue Ser-16 coordinates Mg(2+). 3 residues coordinate substrate: Asp-34, Arg-57, and Gly-79. Arg-116 lines the ATP pocket. Arg-133 contacts substrate.

Belongs to the shikimate kinase family. As to quaternary structure, monomer. Mg(2+) is required as a cofactor.

Its subcellular location is the cytoplasm. It carries out the reaction shikimate + ATP = 3-phosphoshikimate + ADP + H(+). Its pathway is metabolic intermediate biosynthesis; chorismate biosynthesis; chorismate from D-erythrose 4-phosphate and phosphoenolpyruvate: step 5/7. Functionally, catalyzes the specific phosphorylation of the 3-hydroxyl group of shikimic acid using ATP as a cosubstrate. The sequence is that of Shikimate kinase from Clostridium botulinum (strain Eklund 17B / Type B).